The following is a 372-amino-acid chain: NADH-quinone oxidoreductase subunit D (372 aa).

It belongs to the complex I 49 kDa subunit family. In terms of assembly, NDH-1 is composed of 14 different subunits. Subunits NuoB, C, D, E, F, and G constitute the peripheral sector of the complex.

The protein localises to the cell inner membrane. The catalysed reaction is a quinone + NADH + 5 H(+)(in) = a quinol + NAD(+) + 4 H(+)(out). NDH-1 shuttles electrons from NADH, via FMN and iron-sulfur (Fe-S) centers, to quinones in the respiratory chain. The immediate electron acceptor for the enzyme in this species is believed to be ubiquinone. Couples the redox reaction to proton translocation (for every two electrons transferred, four hydrogen ions are translocated across the cytoplasmic membrane), and thus conserves the redox energy in a proton gradient. The polypeptide is NADH-quinone oxidoreductase subunit D (Desulfotalea psychrophila (strain LSv54 / DSM 12343)).